The sequence spans 280 residues: uncharacterized protein (280 aa).

6 consecutive transmembrane segments (helical) span residues 46–66 (LIFL…FVCT), 81–101 (IACS…FLIP), 114–134 (FFYL…SWVV), 137–157 (VWHF…IKLQ), 170–190 (ILFI…LLEL), and 225–245 (IVAC…ALIV). Residues 258–280 (ESGSIEKKNKSSPPPRTWQSNYQ) are disordered.

The protein belongs to the TatC family.

The protein resides in the mitochondrion membrane. This is an uncharacterized protein from Arabidopsis thaliana (Mouse-ear cress).